The following is a 208-amino-acid chain: Ribosomal RNA small subunit methyltransferase G (208 aa).

S-adenosyl-L-methionine is bound by residues Gly-76, Leu-81, 127–128 (VE), and Arg-142.

The protein belongs to the methyltransferase superfamily. RNA methyltransferase RsmG family.

The protein resides in the cytoplasm. It catalyses the reaction guanosine(527) in 16S rRNA + S-adenosyl-L-methionine = N(7)-methylguanosine(527) in 16S rRNA + S-adenosyl-L-homocysteine. Specifically methylates the N7 position of guanine in position 527 of 16S rRNA. The chain is Ribosomal RNA small subunit methyltransferase G from Legionella pneumophila subsp. pneumophila (strain Philadelphia 1 / ATCC 33152 / DSM 7513).